A 59-amino-acid polypeptide reads, in one-letter code: Potassium channel toxin alpha-KTx 15.2 (59 aa).

An N-terminal signal peptide occupies residues 1–22 (MKFSSIILLTLLICSMSKFGNC). Pyrrolidone carboxylic acid is present on glutamine 23. Disulfide bonds link cysteine 30/cysteine 50, cysteine 35/cysteine 55, and cysteine 39/cysteine 57.

It belongs to the short scorpion toxin superfamily. Potassium channel inhibitor family. Alpha-KTx 15 subfamily. In terms of tissue distribution, expressed by the venom gland.

It localises to the secreted. Its function is as follows. Blocks both human ERG1/Kv11.1/KCNH2 potassium channels (in a reversible manner) and A-type voltage-gated potassium channels Kv4/KCND (in an irreversible manner). The presence of the Kv4-associated proteins DPP6 or DPP10 is mandatory to have high-affinity blockade of Kv4.2/KCND2 and Kv4.3/KCND3 channels. In contrast, the presence of the Kv4-associated protein KChIP1/KCNIP1 does not enhance the affinity blockade. May dispose of two functional faces (A and B); the two basic residues (Arg-40 and Lys-41) on the alpha-helix side of the peptide that blocks the hERG current (face A) and the typical dyad through which it blocks A-type currents on the beta-sheet side (face B). In adult rat brain, it binds to sites in the striatum, hippocampus, superior colliculus, and cerebellum. It shares the same target in rat brain than AaTX1 (AC Q867F4) and AmmTX3 (AC P60208). In DPP6 knockout mice, A-type currents are much less affected by the toxin than in wild-type mice. This chain is Potassium channel toxin alpha-KTx 15.2, found in Olivierus martensii (Manchurian scorpion).